The sequence spans 407 residues: Elongation factor Tu (407 aa).

One can recognise a tr-type G domain in the interval 10–217; it reads KPHVNVGTIG…TLDEYIPEPE (208 aa). The tract at residues 19-26 is G1; it reads GHVDHGKT. 19-26 is a GTP binding site; it reads GHVDHGKT. Position 26 (threonine 26) interacts with Mg(2+). The segment at 60-64 is G2; the sequence is GITIA. Positions 81-84 are G3; that stretch reads DCPG. Residues 81–85 and 136–139 each bind GTP; these read DCPGH and NKAD. A G4 region spans residues 136-139; it reads NKAD. The segment at 184-186 is G5; sequence SAL.

This sequence belongs to the TRAFAC class translation factor GTPase superfamily. Classic translation factor GTPase family. EF-Tu/EF-1A subfamily. As to quaternary structure, monomer.

It localises to the cytoplasm. The enzyme catalyses GTP + H2O = GDP + phosphate + H(+). Functionally, GTP hydrolase that promotes the GTP-dependent binding of aminoacyl-tRNA to the A-site of ribosomes during protein biosynthesis. This Teredinibacter turnerae (strain ATCC 39867 / T7901) protein is Elongation factor Tu.